The following is a 531-amino-acid chain: UDP-glucuronosyltransferase 1A6 (531 aa).

An N-terminal signal peptide occupies residues 1 to 26 (MACLLSAAQRASAGVLFVALWGTVLG). N-linked (GlcNAc...) asparagine glycosylation is present at asparagine 294. The helical transmembrane segment at 489-505 (VIGFLLAIVLTVAFVTF) threads the bilayer.

The protein belongs to the UDP-glycosyltransferase family.

The protein localises to the microsome. It localises to the endoplasmic reticulum membrane. The catalysed reaction is glucuronate acceptor + UDP-alpha-D-glucuronate = acceptor beta-D-glucuronoside + UDP + H(+). It carries out the reaction (5Z,8Z,11Z,14Z)-eicosatetraenoate + UDP-alpha-D-glucuronate = O-[(5Z),(8Z),(11Z),(14Z)-eicosatetraenoyl]-beta-D-glucuronate + UDP. The enzyme catalyses 15-hydroxy-(5Z,8Z,11Z,13E)-eicosatetraenoate + UDP-alpha-D-glucuronate = 15-O-(beta-D-glucuronosyl)-(5Z,8Z,11Z,14Z)-eicosatetraenoate + UDP + H(+). It catalyses the reaction (E)-ferulate + UDP-alpha-D-glucuronate = (E)-4-O-(beta-D-glucuronosyl)-ferulate + UDP + H(+). The catalysed reaction is (E)-ferulate + UDP-alpha-D-glucuronate = (E)-ferulic acid beta-D-glucuronate ester + UDP. UDP-glucuronosyltransferase (UGT) that catalyzes phase II biotransformation reactions in which lipophilic substrates are conjugated with glucuronic acid to facilitate their inactivation and excretion from the body. Essential for the elimination and detoxification of drugs, xenobiotics and endogenous compounds. Involved in the glucuronidation of arachidonic acid (AA) and AA-derived eicosanoids including 15-HETE and 20-HETE. Conjugates small planar phenolic molecules such as 4-nitrophenol, 1-naphthol, and 4-methylumbelliferone. The bulky phenol 4-hydroxybiphenyl, androgens and estrogens are not substrates. 2-hydroxybiphenyl is an excellent substrate. Involved in the glucuronidation of the phytochemical ferulic acid at the phenolic or the carboxylic acid group. In Oryctolagus cuniculus (Rabbit), this protein is UDP-glucuronosyltransferase 1A6 (UGT1).